The sequence spans 131 residues: Period circadian protein (131 aa).

The disordered stretch occupies residues 29–109; that stretch reads VTAPVELDPP…NSAGGASGGV (81 aa). Positions 71-93 are enriched in low complexity; the sequence is SGNFTTGSNVRMSSVTNTSNAGT. Positions 94–109 are enriched in gly residues; the sequence is GTSGGGNSAGGASGGV.

As to quaternary structure, forms a heterodimer with timeless (TIM); the complex then translocates into the nucleus. In terms of processing, phosphorylated with a circadian rhythmicity, probably by the double-time protein (dbt). Phosphorylation could be implicated in the stability of per monomer and in the formation of heterodimer per-tim.

It is found in the nucleus. The protein resides in the cytoplasm. It localises to the perinuclear region. Its function is as follows. Essential for biological clock functions. Determines the period length of circadian and ultradian rhythms; an increase in PER dosage leads to shortened circadian rhythms and a decrease leads to lengthened circadian rhythms. Essential for the circadian rhythmicity of locomotor activity, eclosion behavior, and for the rhythmic component of the male courtship song that originates in the thoracic nervous system. The biological cycle depends on the rhythmic formation and nuclear localization of the TIM-PER complex. Light induces the degradation of TIM, which promotes elimination of PER. Nuclear activity of the heterodimer coordinatively regulates PER and TIM transcription through a negative feedback loop. Behaves as a negative element in circadian transcriptional loop. Does not appear to bind DNA, suggesting indirect transcriptional inhibition. This chain is Period circadian protein (per), found in Zaprionus tuberculatus (Vinegar fly).